A 438-amino-acid polypeptide reads, in one-letter code: V-type ATP synthase beta chain (438 aa).

This sequence belongs to the ATPase alpha/beta chains family.

Its function is as follows. Produces ATP from ADP in the presence of a proton gradient across the membrane. The V-type beta chain is a regulatory subunit. This chain is V-type ATP synthase beta chain, found in Chlamydia trachomatis serovar L2b (strain UCH-1/proctitis).